A 551-amino-acid polypeptide reads, in one-letter code: Frizzled-2 (551 aa).

The signal sequence occupies residues 1–26 (MQGVTRASILLIIYHLFTLSLGQLHG). Over 27–231 (EKGISVPEHG…FSQDEIRFAR (205 aa)) the chain is Extracellular. In terms of domain architecture, FZ spans 33–152 (PEHGFCQPIS…HGAEQICVGQ (120 aa)). 5 disulfide bridges follow: C38/C99, C46/C92, C83/C120, C109/C149, and C113/C137. N-linked (GlcNAc...) asparagine glycosylation occurs at N52. N-linked (GlcNAc...) asparagine glycosylation occurs at N153. A helical membrane pass occupies residues 232-252 (IWILIWSVLCCASTFITVTTY). Residues 253 to 265 (LVDMQRFRYPERP) lie on the Cytoplasmic side of the membrane. A helical membrane pass occupies residues 266–286 (IIFLSGCYTMVSVAYIAGFVL). Residues 287 to 313 (GDKVVCNEGFSEDGYKTVVQGTKKEGC) lie on the Extracellular side of the membrane. A helical membrane pass occupies residues 314–334 (TILFMMLYFFSMASSIWWVIL). Over 335–356 (SLTWFLAAGMKWGHEAIEANSQ) the chain is Cytoplasmic. A helical membrane pass occupies residues 357-377 (YFHLAAWAVPAVKTITILAMG). Topologically, residues 378–400 (QIDGDLLSGVCFVGLNNIDPLRG) are extracellular. The helical transmembrane segment at 401–421 (FVLAPLFVYLFIGTSFLLAGF) threads the bilayer. The Cytoplasmic segment spans residues 422 to 447 (VSLFRIRTIMKHDGTKTEKLERLMVR). The chain crosses the membrane as a helical span at residues 448–468 (IGVFSVLYTVPATIVIACYFY). Over 469–505 (EQAFREHWERSWVSQNCKSLAIPCPLQYTPRMTPDFT) the chain is Extracellular. The chain crosses the membrane as a helical span at residues 506–526 (VYMIKYLMTLIVGITSGFWIW). At 527-534 (SGKTLHSW) the chain is on the cytoplasmic side. Positions 529 to 534 (KTLHSW) match the Lys-Thr-X-X-X-Trp motif, mediates interaction with the PDZ domain of Dvl family members motif. The PDZ-binding motif lies at 549-551 (TTV).

It belongs to the G-protein coupled receptor Fz/Smo family. As to expression, widely expressed, especially in the eye anlage, otic vesicle and developing somites.

The protein resides in the membrane. It is found in the cell membrane. Receptor for Wnt proteins. Most of frizzled receptors are coupled to the beta-catenin canonical signaling pathway, which leads to the activation of disheveled proteins, inhibition of GSK-3 kinase, nuclear accumulation of beta-catenin and activation of Wnt target genes. A second signaling pathway involving PKC and calcium fluxes has been seen for some family members, but it is not yet clear if it represents a distinct pathway or if it can be integrated in the canonical pathway, as PKC seems to be required for Wnt-mediated inactivation of GSK-3 kinase. Both pathways seem to involve interactions with G-proteins. May be involved in transduction and intercellular transmission of polarity information during tissue morphogenesis and/or in differentiated tissues. This Xenopus laevis (African clawed frog) protein is Frizzled-2 (fzd2).